Here is a 270-residue protein sequence, read N- to C-terminus: Sec-independent protein translocase protein TatC (270 aa).

Transmembrane regions (helical) follow at residues 25–45, 75–95, 111–131, 156–176, 195–211, and 213–233; these read FIAV…LFDI, VSLL…FWMF, VVIL…FIVF, LGFA…PLVL, KYAI…ITPP, and VVTQ…SIIG. The disordered stretch occupies residues 243–270; sequence SDEEEAAENSDVQTDKSTDDTTPGEDQN.

This sequence belongs to the TatC family. The Tat system comprises two distinct complexes: a TatABC complex, containing multiple copies of TatA, TatB and TatC subunits, and a separate TatA complex, containing only TatA subunits. Substrates initially bind to the TatABC complex, which probably triggers association of the separate TatA complex to form the active translocon.

The protein localises to the cell inner membrane. In terms of biological role, part of the twin-arginine translocation (Tat) system that transports large folded proteins containing a characteristic twin-arginine motif in their signal peptide across membranes. Together with TatB, TatC is part of a receptor directly interacting with Tat signal peptides. The sequence is that of Sec-independent protein translocase protein TatC from Desulforapulum autotrophicum (strain ATCC 43914 / DSM 3382 / VKM B-1955 / HRM2) (Desulfobacterium autotrophicum).